Consider the following 734-residue polypeptide: MSVTIDAQLAQSFGLTGEEYDKLVTIMGRTPSFTELGIFSVMWSEHCSYKSSRIHLKTLPTKAPWVIHGPGENAGVVDIGEGLAAVFKMESHNHPSFIEPYQGAATGVGGILRDVFTMGARPVANLNALRFGDPKHAGTRRIVDGVVRGVGGYGNCVGVPTVGGEVNFHKAYDGNPLVNAMTVGVAKQDKIFLSAAAGVGNPVVYVGSKTGRDGIHGATMSSAEFDEEAASKRPTVQVGDPFIEKLLIEACLELMATDAIVAIQDMGAAGLTSSAVEMAGKGGVGIELNLDAVPQREPNMSAYEMMLSESQERMLMVLKPERTEVARAIFAKWELDFAVIGELTDTGRITIRHKGEVEADIPLAPLADEAPVYNRPTVPLKAPARIETPADPEGIEKALLTLVGCPDLASRAWVWNQYDGSVGGNTARRPGAADAAVVRVEGTRLGLALTTDCTPRYCQADPKTGGAQAVAEAWRNITATGATPLAVTDNLNFGNPERPEIMAQFADAIKGMGDACRALDFPVVSGNVSLYNETRSPSGEAQAILPTPAIGALGVLADASKSIGLAMPDAHDLVLVGGIRGELGQSLWLREICQREDGAPPVVDLAVERRNGDFVRSQIGAGAVAACHDIADGGLLVTVAEMVMASGVGCTLEAAPTDVAAHAFWFGEDQGCYVIATSDGAALVAAAEKANVLAMRLGRSGGTDLELPGTVRVSAERLREINAAFFPRFMGEGA.

The active site involves H46. ATP is bound by residues Y49 and K88. E90 contributes to the Mg(2+) binding site. Residues 91 to 94 and R113 each bind substrate; that span reads SHNH. Catalysis depends on H92, which acts as the Proton acceptor. Mg(2+) is bound at residue D114. Substrate is bound at residue Q237. D265 is a Mg(2+) binding site. 309-311 contacts substrate; sequence ESQ. ATP is bound by residues D489 and G526. N527 contacts Mg(2+). S529 contacts substrate.

It belongs to the FGAMS family. In terms of assembly, monomer. Part of the FGAM synthase complex composed of 1 PurL, 1 PurQ and 2 PurS subunits.

It localises to the cytoplasm. It carries out the reaction N(2)-formyl-N(1)-(5-phospho-beta-D-ribosyl)glycinamide + L-glutamine + ATP + H2O = 2-formamido-N(1)-(5-O-phospho-beta-D-ribosyl)acetamidine + L-glutamate + ADP + phosphate + H(+). It functions in the pathway purine metabolism; IMP biosynthesis via de novo pathway; 5-amino-1-(5-phospho-D-ribosyl)imidazole from N(2)-formyl-N(1)-(5-phospho-D-ribosyl)glycinamide: step 1/2. In terms of biological role, part of the phosphoribosylformylglycinamidine synthase complex involved in the purines biosynthetic pathway. Catalyzes the ATP-dependent conversion of formylglycinamide ribonucleotide (FGAR) and glutamine to yield formylglycinamidine ribonucleotide (FGAM) and glutamate. The FGAM synthase complex is composed of three subunits. PurQ produces an ammonia molecule by converting glutamine to glutamate. PurL transfers the ammonia molecule to FGAR to form FGAM in an ATP-dependent manner. PurS interacts with PurQ and PurL and is thought to assist in the transfer of the ammonia molecule from PurQ to PurL. This is Phosphoribosylformylglycinamidine synthase subunit PurL from Gluconobacter oxydans (strain 621H) (Gluconobacter suboxydans).